The chain runs to 347 residues: Ketol-acid reductoisomerase (NADP(+)) (347 aa).

The region spanning 3–182 is the KARI N-terminal Rossmann domain; sequence TKMFYDKDID…GSGRAGILET (180 aa). Residues 26 to 29, Arg49, Ser53, and 83 to 86 each bind NADP(+); these read YGAQ and DELQ. Residue His108 is part of the active site. Gly134 is a binding site for NADP(+). In terms of domain architecture, KARI C-terminal knotted spans 183-328; it reads TFEEETTEDL…KKVRAMMPWI (146 aa). Positions 191, 195, 227, and 231 each coordinate Mg(2+). A substrate-binding site is contributed by Ser252.

This sequence belongs to the ketol-acid reductoisomerase family. The cofactor is Mg(2+).

It carries out the reaction (2R)-2,3-dihydroxy-3-methylbutanoate + NADP(+) = (2S)-2-acetolactate + NADPH + H(+). It catalyses the reaction (2R,3R)-2,3-dihydroxy-3-methylpentanoate + NADP(+) = (S)-2-ethyl-2-hydroxy-3-oxobutanoate + NADPH + H(+). It participates in amino-acid biosynthesis; L-isoleucine biosynthesis; L-isoleucine from 2-oxobutanoate: step 2/4. It functions in the pathway amino-acid biosynthesis; L-valine biosynthesis; L-valine from pyruvate: step 2/4. Involved in the biosynthesis of branched-chain amino acids (BCAA). Catalyzes an alkyl-migration followed by a ketol-acid reduction of (S)-2-acetolactate (S2AL) to yield (R)-2,3-dihydroxy-isovalerate. In the isomerase reaction, S2AL is rearranged via a Mg-dependent methyl migration to produce 3-hydroxy-3-methyl-2-ketobutyrate (HMKB). In the reductase reaction, this 2-ketoacid undergoes a metal-dependent reduction by NADPH to yield (R)-2,3-dihydroxy-isovalerate. This is Ketol-acid reductoisomerase (NADP(+)) from Leuconostoc mesenteroides subsp. mesenteroides (strain ATCC 8293 / DSM 20343 / BCRC 11652 / CCM 1803 / JCM 6124 / NCDO 523 / NBRC 100496 / NCIMB 8023 / NCTC 12954 / NRRL B-1118 / 37Y).